A 111-amino-acid polypeptide reads, in one-letter code: SRA stem-loop-interacting RNA-binding protein, mitochondrial (111 aa).

An RRM domain is found at 19-96 (PVAFVRKIPW…VKLHVQPQRP (78 aa)). A disordered region spans residues 92–111 (QPQRPKALQGDQTSDEEKDF). Thr104 is modified (phosphothreonine). Residue Ser105 is modified to Phosphoserine.

It localises to the mitochondrion. The protein resides in the nucleus. RNA-binding protein that acts as a nuclear receptor corepressor. Probably acts by binding the SRA RNA, and repressing the SRA-mediated nuclear receptor coactivation. Binds the STR7 loop of SRA RNA. Also able to repress glucocorticoid (GR), androgen (AR), thyroid (TR) and VDR-mediated transactivation. The protein is SRA stem-loop-interacting RNA-binding protein, mitochondrial (SLIRP) of Bos taurus (Bovine).